We begin with the raw amino-acid sequence, 258 residues long: NAD kinase (258 aa).

The Proton acceptor role is filled by Asp51. Residues 51–52, 119–120, Lys130, Asp149, 160–165, and Ala184 each bind NAD(+); these read DG, ND, and TAYSLS.

This sequence belongs to the NAD kinase family. In terms of assembly, homodimer. A divalent metal cation is required as a cofactor.

The protein resides in the cytoplasm. It carries out the reaction NAD(+) + ATP = ADP + NADP(+) + H(+). Its function is as follows. Involved in the regulation of the intracellular balance between NAD(H) and NADP(H), and is a key enzyme in the biosynthesis of NADP. Catalyzes specifically the phosphorylation on 2'-hydroxyl of the adenosine moiety of NAD to yield NADP. The polypeptide is NAD kinase (NADK) (Thermotoga maritima (strain ATCC 43589 / DSM 3109 / JCM 10099 / NBRC 100826 / MSB8)).